Reading from the N-terminus, the 206-residue chain is Thymidylate kinase (206 aa).

ATP is bound at residue Gly14–Ser21.

Belongs to the thymidylate kinase family.

The catalysed reaction is dTMP + ATP = dTDP + ADP. Phosphorylation of dTMP to form dTDP in both de novo and salvage pathways of dTTP synthesis. The chain is Thymidylate kinase from Rickettsia bellii (strain RML369-C).